The primary structure comprises 472 residues: Acyltransferase PapA3 (472 aa).

Belongs to the PapA acyltransferase family.

The catalysed reaction is a long-chain fatty acyl-CoA + alpha,alpha-trehalose = a 2-O-(long-chain fatty acyl)-alpha,alpha-trehalose + CoA. It catalyses the reaction a mycolipenoyl-CoA + a 2-O-(long-chain fatty acyl)-alpha,alpha-trehalose = a 2-O-(long-chain fatty acyl)-3-O-mycolipenoyl-trehalose + CoA. The enzyme catalyses alpha,alpha-trehalose + hexadecanoyl-CoA = 2-O-hexadecanoyl-alpha,alpha-trehalose + CoA. It carries out the reaction 2-O-hexadecanoyl-alpha,alpha-trehalose + hexadecanoyl-CoA = 2-O,3-O-dihexadecanoyl-alpha,alpha-trehalose + CoA. Functionally, involved in the biosynthesis of polyacyltrehalose (PAT), a pentaacylated, trehalose-based glycolipid that could have a role in anchoring the bacterial capsule. Catalyzes the sequential transfer of two palmitoyl groups onto a single glucose residue of trehalose generating the diacylated product 2,3-diacyltrehalose (trehalose dipalmitate). This Mycobacterium tuberculosis (strain CDC 1551 / Oshkosh) protein is Acyltransferase PapA3 (papA3).